A 493-amino-acid polypeptide reads, in one-letter code: 1-aminocyclopropane-1-carboxylate synthase 1 (493 aa).

Residue lysine 279 is modified to N6-(pyridoxal phosphate)lysine.

Belongs to the class-I pyridoxal-phosphate-dependent aminotransferase family. Homodimer. Pyridoxal 5'-phosphate is required as a cofactor.

The enzyme catalyses S-adenosyl-L-methionine = 1-aminocyclopropane-1-carboxylate + S-methyl-5'-thioadenosine + H(+). The protein operates within alkene biosynthesis; ethylene biosynthesis via S-adenosyl-L-methionine; ethylene from S-adenosyl-L-methionine: step 1/2. In terms of biological role, catalyzes the formation of 1-aminocyclopropane-1-carboxylate, a direct precursor of ethylene in higher plants. This Cucurbita pepo (Vegetable marrow) protein is 1-aminocyclopropane-1-carboxylate synthase 1 (ACC1A).